A 209-amino-acid polypeptide reads, in one-letter code: Ribonuclease HII (209 aa).

The RNase H type-2 domain occupies 18 to 209 (SLVAGVDEVG…FKPVKALLER (192 aa)). A divalent metal cation contacts are provided by aspartate 24, glutamate 25, and aspartate 116.

This sequence belongs to the RNase HII family. The cofactor is Mn(2+). Requires Mg(2+) as cofactor.

It localises to the cytoplasm. It catalyses the reaction Endonucleolytic cleavage to 5'-phosphomonoester.. Its function is as follows. Endonuclease that specifically degrades the RNA of RNA-DNA hybrids. The polypeptide is Ribonuclease HII (Shewanella oneidensis (strain ATCC 700550 / JCM 31522 / CIP 106686 / LMG 19005 / NCIMB 14063 / MR-1)).